A 147-amino-acid chain; its full sequence is Hemoglobin subunit gamma (147 aa).

The Globin domain occupies 3 to 147 (HFTAEEKAAI…VANALAYKYH (145 aa)). His-64 and His-93 together coordinate heme b.

This sequence belongs to the globin family. As to quaternary structure, heterotetramer of two alpha chains and two gamma chains in fetal hemoglobin (Hb F). In terms of tissue distribution, red blood cells.

Gamma chains make up the fetal hemoglobin F, in combination with alpha chains. The chain is Hemoglobin subunit gamma (HBG) from Elephas maximus (Indian elephant).